Consider the following 246-residue polypeptide: Mitochondrial inner membrane protease ATP23 homolog (246 aa).

An a divalent metal cation-binding site is contributed by His125. Residue Glu126 is part of the active site. Residue His129 participates in a divalent metal cation binding.

It belongs to the peptidase M76 family. As to quaternary structure, interacts with XRCC6.

The chain is Mitochondrial inner membrane protease ATP23 homolog from Homo sapiens (Human).